A 905-amino-acid polypeptide reads, in one-letter code: Gamma-tubulin complex component 2 (905 aa).

Y83 carries the phosphotyrosine modification. Residues 877 to 905 are disordered; it reads AERSQKAAPQVPVPRGPSAPAPRVAIPAQ. The segment covering 887-896 has biased composition (pro residues); that stretch reads VPVPRGPSAP.

It belongs to the TUBGCP family. In terms of assembly, component of the gamma-tubulin ring complex (gTuRC) consisting of TUBGCP2, TUBGCP3, TUBGCP4, TUBGCP5 and TUBGCP6 and gamma-tubulin TUBG1 or TUBG2. TUBGCP2, TUBGCP3, TUBGCP4, TUBGCP5 and TUBGCP6 assemble in a 5:5:2:1:1 stoichiometry; each is associated with a gamma-tubulin, thereby arranging 14 gamma-tubulins in a helical manner. Gamma-tubulin at the first position is blocked by TUBGCP3 at the last position, allowing 13 protafilaments to grow into a microtubule. The gTuRC (via TUBGCP3 and TUBGCP6) interacts with ACTB and MZT1; the interactions form a luminal bridge that stabilizes the initial structure during complex assembly. The gTuRC (via TUBGCP2) interacts with MZT2A/MZT2B and CDK5RAP2 (via CM1 motif); the interactions play a role in gTuRC activation. Interacts with ATF5; the ATF5:PCNT:polyglutamylated tubulin (PGT) tripartite unites the mother centriole and the pericentriolar material (PCM) in the centrosome.

It is found in the cytoplasm. The protein resides in the cytoskeleton. The protein localises to the microtubule organizing center. Its subcellular location is the centrosome. Its function is as follows. Component of the gamma-tubulin ring complex (gTuRC) which mediates microtubule nucleation. The gTuRC regulates the minus-end nucleation of alpha-beta tubulin heterodimers that grow into microtubule protafilaments, a critical step in centrosome duplication and spindle formation. Plays a role in neuronal migration. This is Gamma-tubulin complex component 2 (Tubgcp2) from Mus musculus (Mouse).